The primary structure comprises 155 residues: UPF0178 protein RHE_CH02229 (155 aa).

It belongs to the UPF0178 family.

This Rhizobium etli (strain ATCC 51251 / DSM 11541 / JCM 21823 / NBRC 15573 / CFN 42) protein is UPF0178 protein RHE_CH02229.